The primary structure comprises 476 residues: MHDIKAIRDNPQAFDAAFTRRGLAPIADSLIKLDETRRAAILESEKAQARRNAASKEIGDAKKAKDNARADALMAEVAELKTTMPALEAAVKEADEALKKALSEIPNLPLDEVPEGADEHGNVDHHRFGAKRDYAFTPKAHYDLGEALGMMDFEAAAKISGARFVVLKKGLARLERAIGQFFLDVHTGEHGYTEVNPPLLVRDDAMFGTAQLPKFREDQFQTVTEEVRRRTIVEFVSSAMKLGASATDAGGSEFARQLANEELVDFSYAKMPERFWLIPTAEVSLTNLVRESILDEKELPMRLTALTPCFRAEAGAAGRDTRGMIRQHQFTKVELVSITTPEQSKDEHERMLSCAEEVLRRLGLHYRVMTLCTGDMGFASQKTYDIEVWMPGQGEGGAYREISSCSVCGDFQARRMDARSRGPDGKPRFVHTLNGSGTAVGRALIAVIENYQQEDGSIAVPDALQPYMGGLKVIAK.

280–282 (TAE) lines the L-serine pocket. 311-313 (RAE) is an ATP binding site. Residue E334 coordinates L-serine. ATP is bound at residue 401–404 (EISS). Residue S436 coordinates L-serine.

It belongs to the class-II aminoacyl-tRNA synthetase family. Type-1 seryl-tRNA synthetase subfamily. Homodimer. The tRNA molecule binds across the dimer.

The protein localises to the cytoplasm. The enzyme catalyses tRNA(Ser) + L-serine + ATP = L-seryl-tRNA(Ser) + AMP + diphosphate + H(+). The catalysed reaction is tRNA(Sec) + L-serine + ATP = L-seryl-tRNA(Sec) + AMP + diphosphate + H(+). The protein operates within aminoacyl-tRNA biosynthesis; selenocysteinyl-tRNA(Sec) biosynthesis; L-seryl-tRNA(Sec) from L-serine and tRNA(Sec): step 1/1. Catalyzes the attachment of serine to tRNA(Ser). Is also able to aminoacylate tRNA(Sec) with serine, to form the misacylated tRNA L-seryl-tRNA(Sec), which will be further converted into selenocysteinyl-tRNA(Sec). The chain is Serine--tRNA ligase from Rhodopseudomonas palustris (strain HaA2).